Here is a 304-residue protein sequence, read N- to C-terminus: Oxygen-dependent coproporphyrinogen-III oxidase (304 aa).

Position 94 (Ser-94) interacts with substrate. The a divalent metal cation site is built by His-98 and His-108. His-108 (proton donor) is an active-site residue. 110–112 is a binding site for substrate; the sequence is NVR. The a divalent metal cation site is built by His-147 and His-177. Residues 242-277 are important for dimerization; the sequence is YVEFNLVWDRGTLFGLQSGGRTESVLMSMPPLARWQ. Residue 260-262 coordinates substrate; it reads GGR.

The protein belongs to the aerobic coproporphyrinogen-III oxidase family. In terms of assembly, homodimer. A divalent metal cation serves as cofactor.

It localises to the cytoplasm. The catalysed reaction is coproporphyrinogen III + O2 + 2 H(+) = protoporphyrinogen IX + 2 CO2 + 2 H2O. The protein operates within porphyrin-containing compound metabolism; protoporphyrin-IX biosynthesis; protoporphyrinogen-IX from coproporphyrinogen-III (O2 route): step 1/1. Its function is as follows. Involved in the heme biosynthesis. Catalyzes the aerobic oxidative decarboxylation of propionate groups of rings A and B of coproporphyrinogen-III to yield the vinyl groups in protoporphyrinogen-IX. This chain is Oxygen-dependent coproporphyrinogen-III oxidase, found in Sodalis glossinidius (strain morsitans).